Reading from the N-terminus, the 69-residue chain is Large ribosomal subunit protein uL30 (69 aa).

The protein belongs to the universal ribosomal protein uL30 family. Part of the 50S ribosomal subunit.

This chain is Large ribosomal subunit protein uL30, found in Rhizobium etli (strain ATCC 51251 / DSM 11541 / JCM 21823 / NBRC 15573 / CFN 42).